The primary structure comprises 117 residues: Small ribosomal subunit protein bS18c (117 aa).

Residues 86–117 (SELTPRTNALKARNKNKQNKYQNNQTKFLSNF) form a disordered region.

The protein belongs to the bacterial ribosomal protein bS18 family. In terms of assembly, part of the 30S ribosomal subunit.

It is found in the plastid. The protein is Small ribosomal subunit protein bS18c of Cuscuta exaltata (Tall dodder).